Here is a 425-residue protein sequence, read N- to C-terminus: UDP-N-acetylglucosamine 1-carboxyvinyltransferase (425 aa).

23-24 (KN) contributes to the phosphoenolpyruvate binding site. Arg100 is a binding site for UDP-N-acetyl-alpha-D-glucosamine. The active-site Proton donor is Cys124. Cys124 carries the post-translational modification 2-(S-cysteinyl)pyruvic acid O-phosphothioketal. Residues 169-172 (KVSV), Asp313, and Val335 each bind UDP-N-acetyl-alpha-D-glucosamine.

It belongs to the EPSP synthase family. MurA subfamily.

The protein resides in the cytoplasm. The catalysed reaction is phosphoenolpyruvate + UDP-N-acetyl-alpha-D-glucosamine = UDP-N-acetyl-3-O-(1-carboxyvinyl)-alpha-D-glucosamine + phosphate. It functions in the pathway cell wall biogenesis; peptidoglycan biosynthesis. In terms of biological role, cell wall formation. Adds enolpyruvyl to UDP-N-acetylglucosamine. The sequence is that of UDP-N-acetylglucosamine 1-carboxyvinyltransferase from Wolbachia pipientis subsp. Culex pipiens (strain wPip).